We begin with the raw amino-acid sequence, 233 residues long: MIDSIRSSRALIDVRRLGTVDYRAAWQQQRDLADARVAGGPDTLLLLQHPAVYTAGRRTEPHERPLDGTPVVDTDRGGKITWHGPGQLVGYPIIGLAEPLDVVDYVRRLEEALIKVCADLGLDTVRVPGRSGVWVPGDAGRPDRKVAAIGVRVSRATTLHGFALNCDCDLGAFSAIVPCGISDAGVTSLTAELRRPVAVDDVVTSVADLVCDALDGVLPVREHSPGARVASAM.

The region spanning 38-218 is the BPL/LPL catalytic domain; it reads AGGPDTLLLL…LVCDALDGVL (181 aa). Residues 57 to 66 are compositionally biased toward basic and acidic residues; it reads RRTEPHERPL. The interval 57 to 77 is disordered; that stretch reads RRTEPHERPLDGTPVVDTDRG. Substrate-binding positions include 76-83, 148-150, and 161-163; these read RGGKITWH, AIG, and GFA. The Acyl-thioester intermediate role is filled by Cys-179.

This sequence belongs to the LipB family.

Its subcellular location is the cytoplasm. The catalysed reaction is octanoyl-[ACP] + L-lysyl-[protein] = N(6)-octanoyl-L-lysyl-[protein] + holo-[ACP] + H(+). It participates in protein modification; protein lipoylation via endogenous pathway; protein N(6)-(lipoyl)lysine from octanoyl-[acyl-carrier-protein]: step 1/2. Catalyzes the transfer of endogenously produced octanoic acid from octanoyl-acyl-carrier-protein onto the lipoyl domains of lipoate-dependent enzymes. Lipoyl-ACP can also act as a substrate although octanoyl-ACP is likely to be the physiological substrate. In Mycobacterium avium (strain 104), this protein is Octanoyltransferase.